The primary structure comprises 234 residues: LexA repressor (234 aa).

The H-T-H motif DNA-binding region spans 41–61; the sequence is RAEIAAELGFRSPNAAEEHLK. Residues S152 and K189 each act as for autocatalytic cleavage activity in the active site.

The protein belongs to the peptidase S24 family. As to quaternary structure, homodimer.

The catalysed reaction is Hydrolysis of Ala-|-Gly bond in repressor LexA.. Functionally, represses a number of genes involved in the response to DNA damage (SOS response), including recA and lexA. In the presence of single-stranded DNA, RecA interacts with LexA causing an autocatalytic cleavage which disrupts the DNA-binding part of LexA, leading to derepression of the SOS regulon and eventually DNA repair. This is LexA repressor from Polaromonas naphthalenivorans (strain CJ2).